A 75-amino-acid polypeptide reads, in one-letter code: UPF0154 protein MMOB4450 (75 aa).

A helical transmembrane segment spans residues 7–27 (IGLIVGLSILFTIVGLVVGFF).

The protein belongs to the UPF0154 family.

It is found in the cell membrane. This Mycoplasma mobile (strain ATCC 43663 / 163K / NCTC 11711) (Mesomycoplasma mobile) protein is UPF0154 protein MMOB4450.